The following is a 639-amino-acid chain: 3D-(3,5/4)-trihydroxycyclohexane-1,2-dione hydrolase (639 aa).

A thiamine diphosphate-binding site is contributed by E65. A thiamine pyrophosphate binding region spans residues 437 to 517 (SLPGDLQRMW…INIILFDNSG (81 aa)). The Mg(2+) site is built by D488 and N515.

The protein belongs to the TPP enzyme family. The cofactor is Mg(2+). It depends on thiamine diphosphate as a cofactor.

It catalyses the reaction 3D-3,5/4-trihydroxycyclohexane-1,2-dione + H2O = 5-deoxy-D-glucuronate + H(+). It functions in the pathway polyol metabolism; myo-inositol degradation into acetyl-CoA; acetyl-CoA from myo-inositol: step 3/7. Its function is as follows. Involved in the cleavage of the C1-C2 bond of 3D-(3,5/4)-trihydroxycyclohexane-1,2-dione (THcHDO) to yield 5-deoxy-glucuronate (5DG). This Geobacillus thermodenitrificans (strain NG80-2) protein is 3D-(3,5/4)-trihydroxycyclohexane-1,2-dione hydrolase.